We begin with the raw amino-acid sequence, 189 residues long: Probable nicotinate-nucleotide adenylyltransferase (189 aa).

It belongs to the NadD family.

It catalyses the reaction nicotinate beta-D-ribonucleotide + ATP + H(+) = deamido-NAD(+) + diphosphate. It functions in the pathway cofactor biosynthesis; NAD(+) biosynthesis; deamido-NAD(+) from nicotinate D-ribonucleotide: step 1/1. In terms of biological role, catalyzes the reversible adenylation of nicotinate mononucleotide (NaMN) to nicotinic acid adenine dinucleotide (NaAD). The polypeptide is Probable nicotinate-nucleotide adenylyltransferase (Bacillus cereus (strain G9842)).